We begin with the raw amino-acid sequence, 1370 residues long: Insulin-like growth factor 1 receptor (1370 aa).

Positions 1 to 30 are cleaved as a signal peptide; the sequence is MKSGSGGGSPTSLWGLVFLSAALSLWPTSG. A disulfide bridge connects residues cysteine 33 and cysteine 52. Asparagine 51, asparagine 102, and asparagine 135 each carry an N-linked (GlcNAc...) asparagine glycan. Intrachain disulfides connect cysteine 150–cysteine 178, cysteine 182–cysteine 205, cysteine 192–cysteine 211, cysteine 215–cysteine 224, cysteine 219–cysteine 230, cysteine 231–cysteine 239, cysteine 235–cysteine 248, cysteine 251–cysteine 260, cysteine 264–cysteine 276, cysteine 282–cysteine 303, cysteine 307–cysteine 321, cysteine 324–cysteine 328, and cysteine 332–cysteine 354. The N-linked (GlcNAc...) asparagine glycan is linked to asparagine 245. A glycan (N-linked (GlcNAc...) asparagine) is linked at asparagine 314. N-linked (GlcNAc...) asparagine glycosylation is found at asparagine 418 and asparagine 439. Cysteine 456 and cysteine 489 are disulfide-bonded. Fibronectin type-III domains are found at residues 490–610 and 611–709; these read ESDV…TNAS and VPSI…TEAE. 9 N-linked (GlcNAc...) asparagine glycosylation sites follow: asparagine 535, asparagine 608, asparagine 623, asparagine 641, asparagine 748, asparagine 757, asparagine 765, asparagine 901, and asparagine 914. Topologically, residues 742-936 are extracellular; sequence DVLQVANTTM…AKTTYENFMH (195 aa). The Fibronectin type-III 3 domain occupies 835 to 928; that stretch reads IPGPVTWEPR…DPVFFYVPAK (94 aa). The chain crosses the membrane as a helical span at residues 937-960; that stretch reads LIIALPVAILLIVGGLVIMLYVFH. At 961–1370 the chain is on the cytoplasmic side; sequence RKRNNSRLGN…ALPLPQSSTC (410 aa). Positions 978–981 match the IRS1- and SHC1-binding motif; sequence NPEY. At tyrosine 981 the chain carries Phosphotyrosine. The Protein kinase domain maps to 1000-1275; that stretch reads ITMNRELGQG…SIKDEMEPSF (276 aa). Residues 1006–1014 and lysine 1034 contribute to the ATP site; that span reads LGQGSFGMV. Aspartate 1136 serves as the catalytic Proton acceptor. Residues tyrosine 1162, tyrosine 1166, and tyrosine 1167 each carry the phosphotyrosine; by autocatalysis modification. Residues lysine 1169 and lysine 1172 each participate in a glycyl lysine isopeptide (Lys-Gly) (interchain with G-Cter in ubiquitin) cross-link. The residue at position 1279 (serine 1279) is a Phosphoserine; by GSK3-beta. Serine 1283 is modified (phosphoserine). The tract at residues 1304–1370 is disordered; it reads NMESVPLDPS…ALPLPQSSTC (67 aa). The span at 1305–1321 shows a compositional bias: low complexity; that stretch reads MESVPLDPSASSASLPL. Residues 1322–1331 show a composition bias toward basic and acidic residues; it reads PERHSGHKAE.

It belongs to the protein kinase superfamily. Tyr protein kinase family. Insulin receptor subfamily. Tetramer of 2 alpha and 2 beta chains linked by disulfide bonds. The alpha chains contribute to the formation of the ligand-binding domain, while the beta chain carries the kinase domain. Interacts with PIK3R1 and with the PTB/PID domains of IRS1 and SHC1 in vitro when autophosphorylated on tyrosine residues. Forms a hybrid receptor with INSR, the hybrid is a tetramer consisting of 1 alpha chain and 1 beta chain of INSR and 1 alpha chain and 1 beta chain of IGF1R. Interacts with ARRB1 and ARRB2. Interacts with GRB10. Interacts with RACK1. Interacts with SOCS1, SOCS2 and SOCS3. Interacts with 14-3-3 proteins. Interacts with NMD2. Interacts with MAP3K5. Interacts with STAT3. Found in a ternary complex with IGF1 and ITGAV:ITGB3 or ITGA6:ITGB4. Interacts (nascent precursor form) with ZFAND2B. In terms of processing, autophosphorylated on tyrosine residues in response to ligand binding. Autophosphorylation occurs in trans, i.e. one subunit of the dimeric receptor phosphorylates tyrosine residues on the other subunit. Autophosphorylation occurs in a sequential manner; Tyr-1166 is predominantly phosphorylated first, followed by phosphorylation of Tyr-1162 and Tyr-1167. While every single phosphorylation increases kinase activity, all three tyrosine residues in the kinase activation loop (Tyr-1162, Tyr-1166 and Tyr-1167) have to be phosphorylated for optimal activity. Can be autophosphorylated at additional tyrosine residues (in vitro). Autophosphorylated is followed by phosphorylation of juxtamembrane tyrosines and C-terminal serines. May also be phosphorylated at Tyr-1162 and Tyr-1167 by mTORC2. Phosphorylation of Tyr-981 is required for IRS1- and SHC1-binding. Phosphorylation of Ser-1279 by GSK-3beta restrains kinase activity and promotes cell surface expression, it requires a priming phosphorylation at Ser-1283. Dephosphorylated by PTPN1. Post-translationally, polyubiquitinated at Lys-1169 and Lys-1172 through both 'Lys-48' and 'Lys-29' linkages, promoting receptor endocytosis and subsequent degradation by the proteasome. Ubiquitination is facilitated by pre-existing phosphorylation. Sumoylated with SUMO1. In terms of processing, controlled by regulated intramembrane proteolysis (RIP). Undergoes metalloprotease-dependent constitutive ectodomain shedding to produce a membrane-anchored 52 kDa C-Terminal fragment which is further processed by presenilin gamma-secretase to yield an intracellular 50 kDa fragment.

The protein resides in the cell membrane. The catalysed reaction is L-tyrosyl-[protein] + ATP = O-phospho-L-tyrosyl-[protein] + ADP + H(+). Its activity is regulated as follows. Activated by autophosphorylation at Tyr-1162, Tyr-1166 and Tyr-1167 on the kinase activation loop; phosphorylation at all three tyrosine residues is required for optimal kinase activity. Inhibited by MSC1609119A-1, BMS-754807, PQIP, benzimidazole pyridinone, isoquinolinedione, bis-azaindole, 3-cyanoquinoline, 2,4-bis-arylamino-1,3-pyrimidine, pyrrolopyrimidine, pyrrole-5-carboxaldehyde, picropodophyllin (PPP), tyrphostin derivatives. While most inhibitors bind to the ATP binding pocket, MSC1609119A-1 functions as allosteric inhibitor and binds close to the DFG motif and the activation loop. Dephosphorylated by PTPN1. Receptor tyrosine kinase which mediates actions of insulin-like growth factor 1 (IGF1). Binds IGF1 with high affinity and IGF2 and insulin (INS) with a lower affinity. The activated IGF1R is involved in cell growth and survival control. IGF1R is crucial for tumor transformation and survival of malignant cell. Ligand binding activates the receptor kinase, leading to receptor autophosphorylation, and tyrosines phosphorylation of multiple substrates, that function as signaling adapter proteins including, the insulin-receptor substrates (IRS1/2), Shc and 14-3-3 proteins. Phosphorylation of IRSs proteins lead to the activation of two main signaling pathways: the PI3K-AKT/PKB pathway and the Ras-MAPK pathway. The result of activating the MAPK pathway is increased cellular proliferation, whereas activating the PI3K pathway inhibits apoptosis and stimulates protein synthesis. Phosphorylated IRS1 can activate the 85 kDa regulatory subunit of PI3K (PIK3R1), leading to activation of several downstream substrates, including protein AKT/PKB. AKT phosphorylation, in turn, enhances protein synthesis through mTOR activation and triggers the antiapoptotic effects of IGFIR through phosphorylation and inactivation of BAD. In parallel to PI3K-driven signaling, recruitment of Grb2/SOS by phosphorylated IRS1 or Shc leads to recruitment of Ras and activation of the ras-MAPK pathway. In addition to these two main signaling pathways IGF1R signals also through the Janus kinase/signal transducer and activator of transcription pathway (JAK/STAT). Phosphorylation of JAK proteins can lead to phosphorylation/activation of signal transducers and activators of transcription (STAT) proteins. In particular activation of STAT3, may be essential for the transforming activity of IGF1R. The JAK/STAT pathway activates gene transcription and may be responsible for the transforming activity. JNK kinases can also be activated by the IGF1R. IGF1 exerts inhibiting activities on JNK activation via phosphorylation and inhibition of MAP3K5/ASK1, which is able to directly associate with the IGF1R. When present in a hybrid receptor with INSR, binds IGF1. This chain is Insulin-like growth factor 1 receptor (Igf1r), found in Rattus norvegicus (Rat).